A 255-amino-acid polypeptide reads, in one-letter code: MERWTGRVALVTGASVGIGAAVARALVQHGMKVVGCARSVDKIEKLAAECQSAGYPGTLIPYKCDLSNEEEILSMFSAIKTLHQGVDVCINNAGLARPEPLLSGKTEGWRTMIDVNVMAVSICTREAYQSMKERNIDDGHIININSMNGHSVVPQSVVHFYSATKYAVTALTEGLRQELREAKTHIRATCISPGLVETGFAFKLHDNDPERAAATYESIRCLKAEDMANAVIYVLSAPPHVQIGDIQMRPTEQIS.

Positions 1–23 (MERWTGRVALVTGASVGIGAAVA) are cleaved as a signal peptide. NADP(+)-binding positions include 13–18 (GASVGI), 38–39 (RS), glutamate 44, 65–66 (DL), and asparagine 92. Positions 146 and 161 each coordinate substrate. Residues tyrosine 161, lysine 165, 196–199 (VETG), and lysine 203 contribute to the NADP(+) site. Tyrosine 161 (proton acceptor) is an active-site residue.

This sequence belongs to the short-chain dehydrogenases/reductases (SDR) family.

The protein localises to the secreted. The enzyme catalyses a 3beta-hydroxysteroid + NADP(+) = a 3-oxosteroid + NADPH + H(+). It catalyses the reaction 17beta-estradiol + NAD(+) = estrone + NADH + H(+). The catalysed reaction is 17beta-estradiol + NADP(+) = estrone + NADPH + H(+). It participates in steroid biosynthesis; estrogen biosynthesis. Its activity is regulated as follows. Inhibited by flavonoids including apigenin, luteolin, genistein, kaempferol and quercetin and also by carbenoxolone, zearalenone, glycyrrhetinic, curcumin and flufenamic acid. In terms of biological role, catalyzes the conversion of the 17-keto group of estrone, 4- and 5-androstenes and 5-alpha-androstanes into their 17-beta-hydroxyl metabolites and the conversion of the 3-keto group of 3-, 3,17- and 3,20- diketosteroids into their 3-hydroxyl metabolites. Exhibits reductive 3-beta-hydroxysteroid dehydrogenase activity toward 5-beta-androstanes, 5-beta-pregnanes, 4-pregnenes and bile acids. May also reduce endogenous and exogenous alpha-dicarbonyl compounds and xenobiotic alicyclic ketones. The protein is Dehydrogenase/reductase SDR family member 11 (DHRS11) of Gallus gallus (Chicken).